Here is a 393-residue protein sequence, read N- to C-terminus: Capsid protein (393 aa).

A coiled-coil region spans residues 5–69 (DLIEKQNRLA…ENELNAQEEK (65 aa)).

It belongs to the Skunalikevirus capsid protein family. As to quaternary structure, homomultimer. In terms of processing, probably cleaved by the viral protease during maturation.

Its subcellular location is the virion. In terms of biological role, capsid protein self-assembles to form an icosahedral capsid with a T=7 symmetry, about 69 nm in diameter, and consisting of 60 capsid proteins hexamers and 11 pentamers. The capsid encapsulates the genomic DNA. The polypeptide is Capsid protein (Lactococcus phage p2 (Lactococcus lactis bacteriophage p2)).